The primary structure comprises 587 residues: Aspartate--tRNA ligase (587 aa).

Glutamate 174 serves as a coordination point for L-aspartate. The aspartate stretch occupies residues 198–201 (QITK). An L-aspartate-binding site is contributed by arginine 220. ATP is bound by residues 220-222 (RDE) and glutamine 229. Residue histidine 443 coordinates L-aspartate. Glutamate 477 is a binding site for ATP. Residue arginine 484 participates in L-aspartate binding. 529-532 (GLDR) contributes to the ATP binding site.

Belongs to the class-II aminoacyl-tRNA synthetase family. Type 1 subfamily. In terms of assembly, homodimer.

Its subcellular location is the cytoplasm. It catalyses the reaction tRNA(Asp) + L-aspartate + ATP = L-aspartyl-tRNA(Asp) + AMP + diphosphate. Functionally, catalyzes the attachment of L-aspartate to tRNA(Asp) in a two-step reaction: L-aspartate is first activated by ATP to form Asp-AMP and then transferred to the acceptor end of tRNA(Asp). This Streptococcus pneumoniae serotype 19F (strain G54) protein is Aspartate--tRNA ligase.